A 376-amino-acid chain; its full sequence is Chaperone protein DnaJ (376 aa).

Positions 5–70 (DFYDVLGVSK…EKKQNYDNFG (66 aa)) constitute a J domain. The CR-type zinc-finger motif lies at 137–215 (GKKQDIKFST…CNGQGNKQAS (79 aa)). 8 residues coordinate Zn(2+): cysteine 150, cysteine 153, cysteine 167, cysteine 170, cysteine 189, cysteine 192, cysteine 203, and cysteine 206. CXXCXGXG motif repeat units lie at residues 150–157 (CNTCNGNG), 167–174 (CTVCGGNG), 189–196 (CPQCAGSG), and 203–210 (CTDCNGQG).

Belongs to the DnaJ family. In terms of assembly, homodimer. The cofactor is Zn(2+).

It is found in the cytoplasm. Its function is as follows. Participates actively in the response to hyperosmotic and heat shock by preventing the aggregation of stress-denatured proteins and by disaggregating proteins, also in an autonomous, DnaK-independent fashion. Unfolded proteins bind initially to DnaJ; upon interaction with the DnaJ-bound protein, DnaK hydrolyzes its bound ATP, resulting in the formation of a stable complex. GrpE releases ADP from DnaK; ATP binding to DnaK triggers the release of the substrate protein, thus completing the reaction cycle. Several rounds of ATP-dependent interactions between DnaJ, DnaK and GrpE are required for fully efficient folding. Also involved, together with DnaK and GrpE, in the DNA replication of plasmids through activation of initiation proteins. The polypeptide is Chaperone protein DnaJ (Pelagibacter ubique (strain HTCC1062)).